Consider the following 183-residue polypeptide: Probable cobalt-precorrin-6B C(15)-methyltransferase (decarboxylating) (183 aa).

Residues Thr-19, 43-47, Asp-64, and Ala-92 each bind S-adenosyl-L-methionine; that span reads GCGSG.

It belongs to the methyltransferase superfamily. Archaeal-type CbiT family.

The catalysed reaction is Co-precorrin-6B + S-adenosyl-L-methionine = Co-precorrin-7 + S-adenosyl-L-homocysteine + CO2. Its pathway is cofactor biosynthesis; adenosylcobalamin biosynthesis; cob(II)yrinate a,c-diamide from sirohydrochlorin (anaerobic route): step 8/10. In terms of biological role, catalyzes the methylation of C-15 in cobalt-precorrin-6B followed by the decarboxylation of C-12 to form cobalt-precorrin-7. In Methanocaldococcus jannaschii (strain ATCC 43067 / DSM 2661 / JAL-1 / JCM 10045 / NBRC 100440) (Methanococcus jannaschii), this protein is Probable cobalt-precorrin-6B C(15)-methyltransferase (decarboxylating).